Reading from the N-terminus, the 712-residue chain is Ribosomal RNA large subunit methyltransferase K/L (712 aa).

The 112-residue stretch at 46 to 157 folds into the THUMP domain; it reads GAYQALLHSR…RENMVVSLDL (112 aa).

This sequence belongs to the methyltransferase superfamily. RlmKL family.

It is found in the cytoplasm. The catalysed reaction is guanosine(2445) in 23S rRNA + S-adenosyl-L-methionine = N(2)-methylguanosine(2445) in 23S rRNA + S-adenosyl-L-homocysteine + H(+). It catalyses the reaction guanosine(2069) in 23S rRNA + S-adenosyl-L-methionine = N(2)-methylguanosine(2069) in 23S rRNA + S-adenosyl-L-homocysteine + H(+). Functionally, specifically methylates the guanine in position 2445 (m2G2445) and the guanine in position 2069 (m7G2069) of 23S rRNA. The sequence is that of Ribosomal RNA large subunit methyltransferase K/L from Actinobacillus pleuropneumoniae serotype 7 (strain AP76).